Consider the following 974-residue polypeptide: Coiled-coil domain-containing protein 146 (974 aa).

Positions 1–44 (MEDRSKYIAEESEDEEDEEQEEKEKKGGASTSTETEEDQEDIPS) are disordered. The segment covering 10 to 21 (EESEDEEDEEQE) has biased composition (acidic residues). Ser-12 carries the post-translational modification Phosphoserine. Coiled-coil stretches lie at residues 105-160 (VQLL…QERE), 195-340 (KLLK…TKEN), 421-474 (LPEQ…REVL), 512-660 (KKLE…NESG), 687-712 (QDIEIHILEEKIRFLKLKVAEKQRQI), and 767-848 (LTEE…ELSM).

In terms of assembly, interacts with CCDC38 and CCDC42. Interacts with intraflagellar transport proteins IFT20 and IFT88.

It localises to the cytoplasm. It is found in the cytoskeleton. Its subcellular location is the microtubule organizing center. The protein resides in the centrosome. The protein localises to the centriole. It localises to the cell projection. It is found in the cilium. Its subcellular location is the flagellum. The protein resides in the flagellum axoneme. The protein localises to the cilium basal body. It localises to the midbody. In terms of biological role, essential for sperm flagellum biogenesis and male fertility. The protein is Coiled-coil domain-containing protein 146 (Ccdc146) of Rattus norvegicus (Rat).